A 360-amino-acid polypeptide reads, in one-letter code: G-protein coupled receptor 183 (360 aa).

Over 1–30 the chain is Extracellular; the sequence is MDIKMDNFTTPSAASLESDCDLYAHHHTAR. N-linked (GlcNAc...) asparagine glycosylation is present at asparagine 7. Residues 31 to 56 form a helical membrane-spanning segment; sequence ILMPLHYSIVFIIGLVGNLLALIVII. Over 57-76 the chain is Cytoplasmic; the sequence is QNRKKINSTTLYSTNLVISD. The helical transmembrane segment at 77–94 threads the bilayer; the sequence is ILFTTALPTRIAYYALGF. Arginine 86 is a 7alpha,25-dihydroxycholesterol binding site. Residues 95–104 lie on the Extracellular side of the membrane; it reads DWRIGDALCR. An intrachain disulfide couples cysteine 103 to cysteine 180. Residues 105–126 form a helical membrane-spanning segment; sequence ITALVFYINTYAGVNFMTCLSI. Positions 111 and 115 each coordinate 7alpha,25-dihydroxycholesterol. Residues 125–133 are interaction with G proteins; it reads SIDRFFAVV. The Cytoplasmic portion of the chain corresponds to 127–148; the sequence is DRFFAVVHPLRYNKIKRIEHAK. A helical membrane pass occupies residues 149 to 167; it reads CICIFVWILVFGQTLPLLI. Residues 168–191 are Extracellular-facing; it reads NPMSKQEAERTTCMEYPNFEETKS. Residues 192–214 traverse the membrane as a helical segment; sequence LPWILLGACFIGYVLPLVIILIC. Topologically, residues 215–240 are cytoplasmic; the sequence is YSQICCKLFKTAKQNPLTEKSGVNKK. The chain crosses the membrane as a helical span at residues 241–264; it reads ALNTIIFIIVVFVVCFTPYHVAII. Residue tyrosine 259 participates in 7alpha,25-dihydroxycholesterol binding. Residues 265–286 are Extracellular-facing; it reads QHMIKKLRLPGLLECSQRHSFQ. A helical membrane pass occupies residues 287 to 311; sequence ISLHFTVCLMNFNCCMDPFIYFFAC. At 312–360 the chain is on the cytoplasmic side; it reads KGYKRKVMKMLKRQVSVSISSAVRSAPEENSREMTETQMMIHSKSLNGK. At serine 327 the chain carries Phosphoserine. The disordered stretch occupies residues 339–360; sequence EENSREMTETQMMIHSKSLNGK. A compositionally biased stretch (polar residues) spans 347–360; sequence ETQMMIHSKSLNGK.

Belongs to the G-protein coupled receptor 1 family. Homodimer and heterodimer. Heterodimerizes with CXCR5; leading to modulate the interaction between of CXCL13 and CXCR5.

It is found in the cell membrane. In terms of biological role, G-protein coupled receptor expressed in lymphocytes that acts as a chemotactic receptor for B-cells, T-cells, splenic dendritic cells, monocytes/macrophages and astrocytes. Receptor for oxysterol 7-alpha,25-dihydroxycholesterol (7-alpha,25-OHC) and other related oxysterols. Mediates cell positioning and movement of a number of cells by binding the 7-alpha,25-OHC ligand that forms a chemotactic gradient. Binding of 7-alpha,25-OHC mediates the correct localization of B-cells during humoral immune responses. Guides B-cell movement along the B-cell zone-T-cell zone boundary and later to interfollicular and outer follicular regions. Its specific expression during B-cell maturation helps position B-cells appropriately for mounting T-dependent antibody responses. Collaborates with CXCR5 to mediate B-cell migration; probably by forming a heterodimer with CXCR5 that affects the interaction between of CXCL13 and CXCR5. Also acts as a chemotactic receptor for some T-cells upon binding to 7-alpha,25-OHC ligand. Promotes follicular helper T (Tfh) cells differentiation by positioning activated T-cells at the follicle-T-zone interface, promoting contact of newly activated CD4 T-cells with activated dendritic cells and exposing them to Tfh-cell-promoting inducible costimulator (ICOS) ligand. Expression in splenic dendritic cells is required for their homeostasis, localization and ability to induce B- and T-cell responses: GPR183 acts as a chemotactic receptor in dendritic cells that mediates the accumulation of CD4(+) dendritic cells in bridging channels. Regulates migration of astrocytes and is involved in communication between astrocytes and macrophages. Promotes osteoclast precursor migration to bone surfaces. Signals constitutively through G(i)-alpha, but not G(s)-alpha or G(q)-alpha. Signals constitutively also via MAPK1/3 (ERK1/2). The polypeptide is G-protein coupled receptor 183 (GPR183) (Bos taurus (Bovine)).